The primary structure comprises 307 residues: F-box protein PP2-B7 (307 aa).

The 47-residue stretch at 37 to 83 folds into the F-box domain; it reads PLSLGDLPEECISLIISFTSPRDACVFALVSKTFESAVQSDIVWEKF.

The chain is F-box protein PP2-B7 (PP2B7) from Arabidopsis thaliana (Mouse-ear cress).